Reading from the N-terminus, the 1446-residue chain is Centrosomal protein of 164 kDa (1446 aa).

Residues 1–195 (MARRPILLGD…PPQGLKAAAC (195 aa)) form an interaction with ATRIP region. The region spanning 56-89 (APLPKGWKPCQNITGDLYYFNFDTGQSIWDHPCD) is the WW domain. 2 disordered regions span residues 106–132 (PGAI…SKSP) and 159–185 (PPSA…EPTL). Over residues 109-121 (IKKKDKKKKKEKK) the composition is skewed to basic residues. Residues 164-176 (RGSQSVSLGSSAD) show a composition bias toward polar residues. Position 202 is a phosphoserine (S202). Disordered regions lie at residues 217–238 (EETN…SSEL), 250–408 (GGNF…SFLG), 424–570 (GDTL…EPAA), and 830–849 (KRQE…KEEH). Over residues 218–228 (ETNEEDEEESD) the composition is skewed to acidic residues. Residues 257–277 (ESPRTSQPDKKDVSLDSDADR) show a composition bias toward basic and acidic residues. Residues 288–312 (GADSSVASANGSKSQGRGASPWNPQ) show a composition bias toward polar residues. 2 stretches are compositionally biased toward basic and acidic residues: residues 355–372 (KEGE…KEAS) and 384–397 (SEIH…RHSG). The segment covering 451–461 (SSIAEPQSKHT) has biased composition (polar residues). Composition is skewed to basic and acidic residues over residues 490–499 (PEWKEAEGPG) and 525–534 (ERAEEKHSQA). The stretch at 1143 to 1197 (EVLGNMRKNLNEETRHLDEMKSAMRKGHDLLKKKEEKLIQLESSLQEEVSDEDTL) forms a coiled coil. A disordered region spans residues 1261–1287 (LGSLNSQPPPQGLGSQPPPPLFTSSLR). Over residues 1267 to 1281 (QPPPQGLGSQPPPPL) the composition is skewed to pro residues. Phosphoserine is present on residues S1369 and S1371.

Interacts (via N-terminus) with ATRIP. Interacts with ATM, ATR and MDC1. Interacts with XPA (via N-terminus) upon UV irradiation. Interacts with CEP83, CCDC92, TTBK2, DVL3, NPHP3 and weakly with NPHP4. Interacts with DZIP1.

It is found in the cytoplasm. Its subcellular location is the cytoskeleton. It localises to the microtubule organizing center. The protein localises to the centrosome. The protein resides in the centriole. It is found in the nucleus. Functionally, plays a role in microtubule organization and/or maintenance for the formation of primary cilia (PC), a microtubule-based structure that protrudes from the surface of epithelial cells. Plays a critical role in G2/M checkpoint and nuclear divisions. A key player in the DNA damage-activated ATR/ATM signaling cascade since it is required for the proper phosphorylation of H2AX, RPA, CHEK2 and CHEK1. Plays a critical role in chromosome segregation, acting as a mediator required for the maintenance of genomic stability through modulation of MDC1, RPA and CHEK1. This Mus musculus (Mouse) protein is Centrosomal protein of 164 kDa.